The primary structure comprises 167 residues: uncharacterized protein (167 aa).

A helical transmembrane segment spans residues Leu5–Phe27.

Its subcellular location is the membrane. This is an uncharacterized protein from Aquifex aeolicus (strain VF5).